Reading from the N-terminus, the 1103-residue chain is Ubiquitin carboxyl-terminal hydrolase 7 (1103 aa).

A compositionally biased stretch (low complexity) spans 1–11 (MNHQQQQQQQQ). 2 disordered regions span residues 1–41 (MNHQ…TQNP) and 46–65 (NVTLSDGHSNAEEDMEDDTS). Residues 1-209 (MNHQQQQQQQ…APHGVAWDSK (209 aa)) are interaction with TSPYL5. S19 is modified (phosphoserine). The span at 20–32 (EPEDMEMEAGDTD) shows a compositional bias: acidic residues. Residues S50 and S54 each carry the phosphoserine modification. The segment at 54 to 209 (SNAEEDMEDD…APHGVAWDSK (156 aa)) is interaction with p53/TP53 and MDM2. The region spanning 69–196 (EATFQFTVER…DDKVTFEVFV (128 aa)) is the MATH domain. The necessary for nuclear localization stretch occupies residues 71-206 (TFQFTVERFS…QADAPHGVAW (136 aa)). The region spanning 215-522 (VGLKNQGATC…NAYMLVYIRE (308 aa)) is the USP domain. C224 (nucleophile) is an active-site residue. Catalysis depends on H465, which acts as the Proton acceptor. K870 is modified (N6-acetyllysine; alternate). K870 is covalently cross-linked (Glycyl lysine isopeptide (Lys-Gly) (interchain with G-Cter in SUMO2); alternate). K870 is covalently cross-linked (Glycyl lysine isopeptide (Lys-Gly) (interchain with G-Cter in ubiquitin); alternate). A Glycyl lysine isopeptide (Lys-Gly) (interchain with G-Cter in SUMO2) cross-link involves residue K883. S964 carries the phosphoserine modification. N6-acetyllysine occurs at positions 1085 and 1097.

It belongs to the peptidase C19 family. In terms of assembly, monomer. Homodimer. Part of a complex with DAXX, MDM2, RASSF1 and USP7. Part of a complex with DAXX, MDM2 and USP7. Interacts with MDM2; the interaction is independent of p53/TP53. Interacts with DAXX; the interaction is direct and independent of MDM2 and p53/TP53. Component of a complex composed of KMT2E, OGT and USP7; the complex stabilizes KMT2E, preventing KMT2E ubiquitination and proteasomal-mediated degradation. Interacts (via MATH domain) with KMT2E. Interacts with OGT. Interacts with FOXO4; the interaction is enhanced in presence of hydrogen peroxide and occurs independently of p53/TP53. Interacts with p53/TP53; the interaction is enhanced in response to DNA damage; the interaction is impaired by TSPYL5. Interacts with PTEN; the interaction is direct. Interacts with ATXN1 and the strength of interaction is influenced by the length of the poly-Gln region in ATXN1. A weaker interaction seen with mutants having longer poly-Gln regions. Interacts with KIAA1530/UVSSA. Interacts with MEX3C and antagonizes its ability to degrade mRNA. Interacts with DNMT1 and UHRF1. Interacts with FOXP3. Interacts (via MATH domain) with RNF220. Associated component of the Polycomb group (PcG) multiprotein PRC1-like complex. Interacts with EPOP. Interacts with OTUD4 and USP9X; the interaction is direct. Interacts with CRY2. Interacts with REST. Interacts with ERCC6. Part of a complex consisting of USP7, MAGEL2 and TRIM27; directly interacts with MAGEL2; directly interacts with TRIM27. Polyneddylated. In terms of processing, not sumoylated. Post-translationally, polyubiquitinated. Ubiquitinated at Lys-870. In terms of tissue distribution, widely expressed. High expression is detected in brain, bone marrow, thymus and testis.

Its subcellular location is the nucleus. It is found in the cytoplasm. The protein localises to the PML body. The protein resides in the chromosome. It catalyses the reaction Thiol-dependent hydrolysis of ester, thioester, amide, peptide and isopeptide bonds formed by the C-terminal Gly of ubiquitin (a 76-residue protein attached to proteins as an intracellular targeting signal).. Hydrolase that deubiquitinates target proteins such as ARMC5, FOXO4, DEPTOR, KAT5, p53/TP53, MDM2, ERCC6, DNMT1, UHRF1, PTEN, KMT2E/MLL5 and DAXX. Together with DAXX, prevents MDM2 self-ubiquitination and enhances the E3 ligase activity of MDM2 towards p53/TP53, thereby promoting p53/TP53 ubiquitination and proteasomal degradation. Deubiquitinates p53/TP53, preventing degradation of p53/TP53, and enhances p53/TP53-dependent transcription regulation, cell growth repression and apoptosis. Deubiquitinates p53/TP53 and MDM2 and strongly stabilizes p53/TP53 even in the presence of excess MDM2, and also induces p53/TP53-dependent cell growth repression and apoptosis. Deubiquitination of FOXO4 in presence of hydrogen peroxide is not dependent on p53/TP53 and inhibits FOXO4-induced transcriptional activity. In association with DAXX, is involved in the deubiquitination and translocation of PTEN from the nucleus to the cytoplasm, both processes that are counteracted by PML. Deubiquitinates KMT2E preventing KMT2E proteasomal-mediated degradation. Involved in cell proliferation during early embryonic development. Involved in transcription-coupled nucleotide excision repair (TC-NER) in response to UV damage: recruited to DNA damage sites following interaction with KIAA1530/UVSSA and promotes deubiquitination of ERCC6, preventing UV-induced degradation of ERCC6. Involved in maintenance of DNA methylation via its interaction with UHRF1 and DNMT1: acts by mediating deubiquitination of UHRF1 and DNMT1, preventing their degradation and promoting DNA methylation by DNMT1. Deubiquitinates alkylation repair enzyme ALKBH3. OTUD4 recruits USP7 and USP9X to stabilize ALKBH3, thereby promoting the repair of alkylated DNA lesions. Acts as a chromatin regulator via its association with the Polycomb group (PcG) multiprotein PRC1-like complex; may act by deubiquitinating components of the PRC1-like complex. Able to mediate deubiquitination of histone H2B; it is however unsure whether this activity takes place in vivo. Exhibits a preference towards 'Lys-48'-linked ubiquitin chains. Increases regulatory T-cells (Treg) suppressive capacity by deubiquitinating and stabilizing the transcription factor FOXP3 which is crucial for Treg cell function. Plays a role in the maintenance of the circadian clock periodicity via deubiquitination and stabilization of the CRY1 and CRY2 proteins. Deubiquitinates REST, thereby stabilizing REST and promoting the maintenance of neural progenitor cells. Deubiquitinates SIRT7, inhibiting SIRT7 histone deacetylase activity and regulating gluconeogenesis. Involved in the regulation of WASH-dependent actin polymerization at the surface of endosomes and the regulation of endosomal protein recycling. It maintains optimal WASH complex activity and precise F-actin levels via deubiquitination of TRIM27 and WASHC1. Mediates the deubiquitination of phosphorylated DEPTOR, promoting its stability and leading to decreased mTORC1 signaling. This is Ubiquitin carboxyl-terminal hydrolase 7 (Usp7) from Mus musculus (Mouse).